The sequence spans 455 residues: Chitin deacetylase 2 (455 aa).

The first 19 residues, 1 to 19 (MIPSTAAALLTLTAGAAFA), serve as a signal peptide directing secretion. Residues Asn-86, Asn-98, Asn-122, and Asn-142 are each glycosylated (N-linked (GlcNAc...) asparagine). The NodB homology domain maps to 157-347 (MTWGLGFDDG…IKSAFNYIVP (191 aa)). The active-site Proton acceptor is Asp-164. An acetate-binding site is contributed by Asp-164. Residue Asp-165 coordinates Co(2+). A glycan (N-linked (GlcNAc...) asparagine) is linked at Asn-168. 2 residues coordinate Co(2+): His-214 and His-218. Tyr-255 contributes to the acetate binding site. N-linked (GlcNAc...) asparagine glycans are attached at residues Asn-270 and Asn-308. Residue His-321 is the Proton donor of the active site. N-linked (GlcNAc...) asparagine glycosylation is found at Asn-325, Asn-353, Asn-362, and Asn-377. Residues 381–423 (STTQKDGSSSTNTASGSGAAGSASATSSSDDSSSSGGSSGSSG) form a disordered region. Asn-426 carries N-linked (GlcNAc...) asparagine glycosylation. Residue Ser-429 is the site of GPI-anchor amidated serine attachment. Residues 430–455 (GALGMFDSLSGVGLILGGVVAGVMLL) constitute a propeptide, removed in mature form.

The protein belongs to the polysaccharide deacetylase family. Co(2+) serves as cofactor. Post-translationally, the GPI anchor is required for the attachment to the cell membrane but not for cell surface targeting.

It localises to the secreted. Its subcellular location is the cell wall. The protein localises to the cell membrane. The catalysed reaction is [(1-&gt;4)-N-acetyl-beta-D-glucosaminyl](n) + n H2O = chitosan + n acetate. Its function is as follows. Hydrolyzes the N-acetamido groups of N-acetyl-D-glucosamine residues in chitin to form chitosan and acetate. Chitosan is required to anchor melanin to the cell wall, for maintenance of cell wall integrity, and for proper cytokinesis. Chitosan offers an advantage during infection as it is less readily detected than chitin by host immunosurveillance mechanisms. The polypeptide is Chitin deacetylase 2 (Cryptococcus neoformans var. grubii serotype A (strain H99 / ATCC 208821 / CBS 10515 / FGSC 9487) (Filobasidiella neoformans var. grubii)).